A 394-amino-acid chain; its full sequence is HORMA domain-containing protein 1 (394 aa).

The HORMA domain occupies 24-226 (HQSLVLVKRL…TPFHIFKVKV (203 aa)). Positions 253–282 (ILRDKDVEDEQEHYTSDDLDIETKMEEQEK) are enriched in basic and acidic residues. Residues 253-394 (ILRDKDVEDE…RKFSEPKEHI (142 aa)) are disordered. Residues 288–300 (ELEEPSLVCEEDE) show a composition bias toward acidic residues. 2 stretches are compositionally biased toward polar residues: residues 310-324 (LSIS…VNKT) and 343-352 (KMANGNQPVK). Positions 362–374 (QHESGRIVLHHFD) are enriched in basic and acidic residues. A Phosphoserine modification is found at Ser376. The Nuclear localization signal signature appears at 383 to 386 (KRRK).

Interacts with HORMAD2. Interacts with IHO1. In terms of processing, phosphorylated at Ser-377 in a SPO11-dependent manner. Testis-specific. Over-expressed in carcinomas.

It localises to the nucleus. Its subcellular location is the chromosome. Its function is as follows. Plays a key role in meiotic progression. Regulates 3 different functions during meiosis: ensures that sufficient numbers of processed DNA double-strand breaks (DSBs) are available for successful homology search by increasing the steady-state numbers of single-stranded DSB ends. Promotes synaptonemal-complex formation independently of its role in homology search. Plays a key role in the male mid-pachytene checkpoint and the female meiotic prophase checkpoint: required for efficient build-up of ATR activity on unsynapsed chromosome regions, a process believed to form the basis of meiotic silencing of unsynapsed chromatin (MSUC) and meiotic prophase quality control in both sexes. The protein is HORMA domain-containing protein 1 of Homo sapiens (Human).